Reading from the N-terminus, the 477-residue chain is M-phase inducer phosphatase 3 (477 aa).

The tract at residues 1-20 (MSAEFFSSKREEGSLASGPS) is disordered. N-acetylserine is present on S2. Residues S20 and S38 each carry the phosphoserine modification. T48 is modified (phosphothreonine; by CDK1). A phosphoserine mark is found at S58, S62, and S65. Residue T68 is modified to Phosphothreonine; by CDK1. Phosphoserine; by CDK1 is present on S123. S130 is subject to Phosphoserine. Position 131 is a phosphothreonine (T131). S169 carries the post-translational modification Phosphoserine; by CDK1. 2 positions are modified to phosphoserine; by PLK3: S192 and S199. S218 is modified (phosphoserine; by CDK1). Phosphoserine; by CHEK1, CHEK2, BRSK1, MAPK14 AND MARK3 is present on S220. The 108-residue stretch at 325–432 (LIEKFYIIDC…FFPEYMELCE (108 aa)) folds into the Rhodanese domain. C381 is an active-site residue. S476 carries the phosphoserine modification.

Belongs to the MPI phosphatase family. In terms of assembly, interacts with MAPK14 and 14-3-3 proteins. When phosphorylated on Ser-130 and/or Thr-131, interacts with PLK1. Interacts with MARK3/C-TAK1. In terms of processing, phosphorylated by CHEK1 and MAPK14 at Ser-220. This phosphorylation creates a binding site for 14-3-3 protein and inhibits the phosphatase. Phosphorylated by PLK4. Phosphorylated by PLK1, leading to activate the phosphatase activity. Phosphorylation by PLK3 at Ser-192 promotes nuclear translocation. Ser-199 is a minor phosphorylation site. Phosphorylation by CDK1 occurs at G2 and G2-M transition and leads to increased activity.

The protein localises to the nucleus. It carries out the reaction O-phospho-L-tyrosyl-[protein] + H2O = L-tyrosyl-[protein] + phosphate. In terms of biological role, functions as a dosage-dependent inducer in mitotic control. Tyrosine protein phosphatase required for progression of the cell cycle. When phosphorylated, highly effective in activating G2 cells into prophase. Directly dephosphorylates CDK1 and activates its kinase activity. In Bos taurus (Bovine), this protein is M-phase inducer phosphatase 3 (CDC25C).